Here is a 161-residue protein sequence, read N- to C-terminus: Transcription elongation factor GreA (161 aa).

Residues 43-68 (SENAEYEAAREKQAFVEARIKHLEDI) adopt a coiled-coil conformation.

The protein belongs to the GreA/GreB family.

Functionally, necessary for efficient RNA polymerase transcription elongation past template-encoded arresting sites. The arresting sites in DNA have the property of trapping a certain fraction of elongating RNA polymerases that pass through, resulting in locked ternary complexes. Cleavage of the nascent transcript by cleavage factors such as GreA or GreB allows the resumption of elongation from the new 3'terminus. GreA releases sequences of 2 to 3 nucleotides. In Rickettsia bellii (strain OSU 85-389), this protein is Transcription elongation factor GreA.